A 76-amino-acid polypeptide reads, in one-letter code: Acyl carrier protein (76 aa).

Positions Met1–Leu75 constitute a Carrier domain. At Ser35 the chain carries O-(pantetheine 4'-phosphoryl)serine.

It belongs to the acyl carrier protein (ACP) family. In terms of processing, 4'-phosphopantetheine is transferred from CoA to a specific serine of apo-ACP by AcpS. This modification is essential for activity because fatty acids are bound in thioester linkage to the sulfhydryl of the prosthetic group.

The protein resides in the cytoplasm. The protein operates within lipid metabolism; fatty acid biosynthesis. In terms of biological role, carrier of the growing fatty acid chain in fatty acid biosynthesis. The polypeptide is Acyl carrier protein (Phytoplasma australiense).